Reading from the N-terminus, the 169-residue chain is NADH-quinone oxidoreductase subunit B (169 aa).

The [4Fe-4S] cluster site is built by Cys42, Cys43, Cys107, and Cys136.

Belongs to the complex I 20 kDa subunit family. In terms of assembly, NDH-1 is composed of 14 different subunits. Subunits NuoB, C, D, E, F, and G constitute the peripheral sector of the complex. Requires [4Fe-4S] cluster as cofactor.

The protein localises to the cell inner membrane. The catalysed reaction is a quinone + NADH + 5 H(+)(in) = a quinol + NAD(+) + 4 H(+)(out). Functionally, NDH-1 shuttles electrons from NADH, via FMN and iron-sulfur (Fe-S) centers, to quinones in the respiratory chain. The immediate electron acceptor for the enzyme in this species is believed to be ubiquinone. Couples the redox reaction to proton translocation (for every two electrons transferred, four hydrogen ions are translocated across the cytoplasmic membrane), and thus conserves the redox energy in a proton gradient. The sequence is that of NADH-quinone oxidoreductase subunit B from Helicobacter hepaticus (strain ATCC 51449 / 3B1).